The primary structure comprises 359 residues: MKTLTVHTPSHSYPIFIGNGLLPQAGSLLKPHLGKRAAIITNETVAPLYLGTLQTALDAAGVSHFSIILPDGEAHKNWQTLNLIFDGLMQNRAERKTTLIALGGGVIGDMTGFAAATYQRGAPFVQIPTTLLSQVDSSVGGKTAINHPLGKNMIGAFYQPQAVLADLDTLHTLPARELSAGMAEVIKYGTLGDISFFEWLEQHMPELMALERAPLIQAVYRCCQMKADIVAQDETEQGIRAWLNLGHTFGHAIETEMGYGTWLHGEAVAAGCVLAARLSEQLGKISAADTARLAALLEAAGLPSAPPVFAFEKWLEHMSHDKKVSSGVMRFIGLNRLGEAVITEITDTDILRRTLQPYL.

NAD(+) contacts are provided by residues 71-76 (DGEAHK), 105-109 (GVIGD), 129-130 (TT), Lys142, Lys151, and 169-172 (TLHT). Zn(2+)-binding residues include Glu184, His247, and His264.

This sequence belongs to the sugar phosphate cyclases superfamily. Dehydroquinate synthase family. Co(2+) is required as a cofactor. Zn(2+) serves as cofactor. The cofactor is NAD(+).

It localises to the cytoplasm. The enzyme catalyses 7-phospho-2-dehydro-3-deoxy-D-arabino-heptonate = 3-dehydroquinate + phosphate. Its pathway is metabolic intermediate biosynthesis; chorismate biosynthesis; chorismate from D-erythrose 4-phosphate and phosphoenolpyruvate: step 2/7. In terms of biological role, catalyzes the conversion of 3-deoxy-D-arabino-heptulosonate 7-phosphate (DAHP) to dehydroquinate (DHQ). The polypeptide is 3-dehydroquinate synthase (Neisseria meningitidis serogroup C (strain 053442)).